A 173-amino-acid polypeptide reads, in one-letter code: MPTTTTTAEDGFPATGRLASVDYGTVRIGVAICDPDWILASPLEVHPVSTPEKDAQYFIDLAKSERIAAWVVGLPIHCDGGESDKSKESRKFAAWLKETTGLPTRLFDERFTTVAANAKIRQGKTTRKKTKQRVDAVAAQVLLESFLEACRYRGELAGHCLEDSTSDESLDDA.

Belongs to the YqgF nuclease family.

It is found in the cytoplasm. Functionally, could be a nuclease involved in processing of the 5'-end of pre-16S rRNA. This chain is Putative pre-16S rRNA nuclease, found in Rhodopirellula baltica (strain DSM 10527 / NCIMB 13988 / SH1).